The chain runs to 529 residues: Cytochrome P450 monooxygenase ausG (529 aa).

Residues 31 to 51 (LLVVCGLPGLLLLFFVTAILL) form a helical membrane-spanning segment. C470 serves as a coordination point for heme.

This sequence belongs to the cytochrome P450 family. Heme is required as a cofactor.

The protein resides in the membrane. The protein operates within secondary metabolite biosynthesis; terpenoid biosynthesis. Functionally, cytochrome P450 monooxygenase; part of the gene cluster that mediates the biosynthesis of calidodehydroaustin, a fungal meroterpenoid. The first step of the pathway is the synthesis of 3,5-dimethylorsellinic acid by the polyketide synthase ausA. 3,5-dimethylorsellinic acid is then prenylated by the polyprenyl transferase ausN. Further epoxidation by the FAD-dependent monooxygenase ausM and cyclization by the probable terpene cyclase ausL lead to the formation of protoaustinoid A. Protoaustinoid A is then oxidized to spiro-lactone preaustinoid A3 by the combined action of the FAD-binding monooxygenases ausB and ausC, and the dioxygenase ausE. Acid-catalyzed keto-rearrangement and ring contraction of the tetraketide portion of preaustinoid A3 by ausJ lead to the formation of preaustinoid A4. The aldo-keto reductase ausK, with the help of ausH, is involved in the next step by transforming preaustinoid A4 into isoaustinone which is in turn hydroxylated by the P450 monooxygenase ausI to form austinolide. The cytochrome P450 monooxygenase ausG modifies austinolide to austinol. Austinol is further acetylated to austin by the O-acetyltransferase ausP, which spontaneously changes to dehydroaustin. The cytochrome P450 monooxygenase ausR then converts dehydroaustin is into 7-dehydrodehydroaustin. The hydroxylation catalyzed by ausR permits the O-acetyltransferase ausQ to add an additional acetyl group to the molecule, leading to the formation of acetoxydehydroaustin. The short chain dehydrogenase ausT catalyzes the reduction of the double bond present between carbon atoms 1 and 2 to convert 7-dehydrodehydroaustin into 1,2-dihydro-7-hydroxydehydroaustin. AusQ catalyzes not only an acetylation reaction but also the addition of the PKS ausV diketide product to 1,2-dihydro-7-hydroxydehydroaustin, forming precalidodehydroaustin. Finally, the iron/alpha-ketoglutarate-dependent dioxygenase converts precalidodehydroaustin into calidodehydroaustin. This Aspergillus calidoustus protein is Cytochrome P450 monooxygenase ausG.